We begin with the raw amino-acid sequence, 203 residues long: Outer-membrane lipoprotein carrier protein (203 aa).

Residues 1–20 form the signal peptide; sequence MRRGRVWLAALCLAAGAAHA.

This sequence belongs to the LolA family. Monomer.

Its subcellular location is the periplasm. Participates in the translocation of lipoproteins from the inner membrane to the outer membrane. Only forms a complex with a lipoprotein if the residue after the N-terminal Cys is not an aspartate (The Asp acts as a targeting signal to indicate that the lipoprotein should stay in the inner membrane). In Methylibium petroleiphilum (strain ATCC BAA-1232 / LMG 22953 / PM1), this protein is Outer-membrane lipoprotein carrier protein.